The sequence spans 347 residues: Tetraacyldisaccharide 4'-kinase (347 aa).

ATP is bound at residue 54–61 (TVGGAGKT).

Belongs to the LpxK family.

The catalysed reaction is a lipid A disaccharide + ATP = a lipid IVA + ADP + H(+). It participates in glycolipid biosynthesis; lipid IV(A) biosynthesis; lipid IV(A) from (3R)-3-hydroxytetradecanoyl-[acyl-carrier-protein] and UDP-N-acetyl-alpha-D-glucosamine: step 6/6. In terms of biological role, transfers the gamma-phosphate of ATP to the 4'-position of a tetraacyldisaccharide 1-phosphate intermediate (termed DS-1-P) to form tetraacyldisaccharide 1,4'-bis-phosphate (lipid IVA). This Rhizobium etli (strain CIAT 652) protein is Tetraacyldisaccharide 4'-kinase.